We begin with the raw amino-acid sequence, 432 residues long: Adenylosuccinate synthetase (432 aa).

Residues 12 to 18 (GDEGKGK) and 40 to 42 (GHT) contribute to the GTP site. Catalysis depends on D13, which acts as the Proton acceptor. Mg(2+) contacts are provided by D13 and G40. IMP contacts are provided by residues 13–16 (DEGK), 38–41 (NAGH), T126, R140, Q219, T234, and R300. H41 functions as the Proton donor in the catalytic mechanism. Substrate is bound at residue 296-302 (STTGRPR). GTP is bound by residues R302, 328 to 330 (KLD), and 410 to 412 (STG).

This sequence belongs to the adenylosuccinate synthetase family. Homodimer. Mg(2+) serves as cofactor.

The protein resides in the cytoplasm. The enzyme catalyses IMP + L-aspartate + GTP = N(6)-(1,2-dicarboxyethyl)-AMP + GDP + phosphate + 2 H(+). The protein operates within purine metabolism; AMP biosynthesis via de novo pathway; AMP from IMP: step 1/2. In terms of biological role, plays an important role in the de novo pathway of purine nucleotide biosynthesis. Catalyzes the first committed step in the biosynthesis of AMP from IMP. The protein is Adenylosuccinate synthetase of Aquifex aeolicus (strain VF5).